We begin with the raw amino-acid sequence, 446 residues long: MPFIPHTPDDIEKMLAVIGAESIDQLFDEIPSALANIQQVPPGLNEAGITRLMEKREPNKQLCFIGAGAYEHHIPAAVWEIATRGEFYTAYTPYQAEASQGSLQLIYEYQTMMAELMAMDVSNASLYDGASALAEAALMAVRIKRGKAQRILVPASVNPFYRKVLSSIVEQQKINVEIIPFDPTMGIVNSELLKAKNAEGAAAIIIPQPNFFGCLEAVDVLTDWAHANDLLVIASVNPTAMALLKPPGQWGQKGADIVCGEGQPLGVPLASGGPYFGFMCCKKDYVRQLPGRIVGRTVDKKGREGFTLTLQAREQHIRRSKATSNICTNQGLAVVAATIYLSLLGATGLREVALASHTQSRDLFQRLSAVKGVSPVFSSPIFHEFVVRLEKPVEEVLAAMAEQGIQAGFSLKNDYPKLGNGLLICVTDTKTDDDLMAYENALRSIQ.

This sequence belongs to the GcvP family. N-terminal subunit subfamily. The glycine cleavage system is composed of four proteins: P, T, L and H. In this organism, the P 'protein' is a heterodimer of two subunits.

It carries out the reaction N(6)-[(R)-lipoyl]-L-lysyl-[glycine-cleavage complex H protein] + glycine + H(+) = N(6)-[(R)-S(8)-aminomethyldihydrolipoyl]-L-lysyl-[glycine-cleavage complex H protein] + CO2. The glycine cleavage system catalyzes the degradation of glycine. The P protein binds the alpha-amino group of glycine through its pyridoxal phosphate cofactor; CO(2) is released and the remaining methylamine moiety is then transferred to the lipoamide cofactor of the H protein. This chain is Probable glycine dehydrogenase (decarboxylating) subunit 1, found in Coxiella burnetii (strain CbuK_Q154) (Coxiella burnetii (strain Q154)).